The sequence spans 1117 residues: Endogenous retrovirus group K member 9 Pol protein (1117 aa).

Residue G2 is the site of N-myristoyl glycine attachment. The Reverse transcriptase domain maps to 58-195 (KDWKRIGKEL…AGQVPVTLQP (138 aa)). The disordered stretch occupies residues 165–264 (GKGPELVGPS…APPSRQGSEL (100 aa)). Residues 232–247 (GMPPAPQGRAPYPQPP) are compositionally biased toward pro residues. 2 consecutive CCHC-type zinc fingers follow at residues 544–561 (GKCY…NCPV) and 580–597 (DLCP…QCRS). The disordered stretch occupies residues 598 to 629 (KFDKNGQPLSGNEQRGQPQAPQQTGAFPIQPF). Polar residues predominate over residues 604 to 622 (QPLSGNEQRGQPQAPQQTG). In terms of domain architecture, Peptidase A2 spans 800–875 (FEGLVDTGAD…IPLNLWGRDL (76 aa)). D805 is a catalytic residue. The 47-residue stretch at 890–936 (YSPTSQKIMTKRGYIPGKGLGKNEDGIKIPFEAKINQKREGIGYPFL) folds into the G-patch domain.

The protein belongs to the beta type-B retroviral polymerase family. HERV class-II K(HML-2) pol subfamily. Myristoylation is essential for retroviral assembly. Alteration of the glycine residue leads to a block in the budding of particles and an accumulation of Gag inside the cell. Post-translationally, specific enzymatic cleavages may yield mature proteins.

The protein resides in the cell membrane. It carries out the reaction Processing at the authentic HIV-1 PR recognition site and release of the mature p17 matrix and the p24 capsid protein, as a result of the cleavage of the -SQNY-|-PIVQ- cleavage site.. It catalyses the reaction DNA(n) + a 2'-deoxyribonucleoside 5'-triphosphate = DNA(n+1) + diphosphate. The catalysed reaction is Endonucleolytic cleavage to 5'-phosphomonoester.. Functionally, the products of the Gag polyproteins of infectious retroviruses perform highly complex orchestrated tasks during the assembly, budding, maturation, and infection stages of the viral replication cycle. During viral assembly, the proteins form membrane associations and self-associations that ultimately result in budding of an immature virion from the infected cell. Gag precursors also function during viral assembly to selectively bind and package two plus strands of genomic RNA. Endogenous Gag proteins may have kept, lost or modified their original function during evolution. Early post-infection, the reverse transcriptase converts the viral RNA genome into double-stranded viral DNA. The RNase H domain of the reverse transcriptase performs two functions. It degrades the RNA template and specifically removes the RNA primer from the RNA/DNA hybrid. Following nuclear import, the integrase catalyzes the insertion of the linear, double-stranded viral DNA into the host cell chromosome. Endogenous Pol proteins may have kept, lost or modified their original function during evolution. This Homo sapiens (Human) protein is Endogenous retrovirus group K member 9 Pol protein (ERVK-9).